A 387-amino-acid chain; its full sequence is G2/mitotic-specific cyclin-B2 (387 aa).

The protein belongs to the cyclin family. Cyclin AB subfamily. Interacts with the CDK1 protein kinase to form a serine/threonine kinase holoenzyme complex also known as maturation promoting factor (MPF). The cyclin subunit imparts substrate specificity to the complex.

Functionally, essential for the control of the cell cycle at the G2/M (mitosis) transition. The protein is G2/mitotic-specific cyclin-B2 (ccnb2) of Oryzias latipes (Japanese rice fish).